Reading from the N-terminus, the 125-residue chain is Large ribosomal subunit protein bL12 (125 aa).

It belongs to the bacterial ribosomal protein bL12 family. Homodimer. Part of the ribosomal stalk of the 50S ribosomal subunit. Forms a multimeric L10(L12)X complex, where L10 forms an elongated spine to which 2 to 4 L12 dimers bind in a sequential fashion. Binds GTP-bound translation factors.

Forms part of the ribosomal stalk which helps the ribosome interact with GTP-bound translation factors. Is thus essential for accurate translation. The chain is Large ribosomal subunit protein bL12 from Rhizobium johnstonii (strain DSM 114642 / LMG 32736 / 3841) (Rhizobium leguminosarum bv. viciae).